A 316-amino-acid chain; its full sequence is Probable cell division protein WhiA (316 aa).

The H-T-H motif DNA-binding region spans 277 to 310 (SLEQLGRLADPPITKDAIAGRIRRLLQLAEKTEK).

The protein belongs to the WhiA family.

Its function is as follows. Involved in cell division and chromosome segregation. In Bifidobacterium adolescentis (strain ATCC 15703 / DSM 20083 / NCTC 11814 / E194a), this protein is Probable cell division protein WhiA.